Consider the following 786-residue polypeptide: LPS-assembly protein LptD (786 aa).

Positions 1–24 are cleaved as a signal peptide; the sequence is MKKRIPTLLATMIASALYSHQGLA. Cystine bridges form between C31/C726 and C173/C727.

Belongs to the LptD family. Component of the lipopolysaccharide transport and assembly complex. Interacts with LptE and LptA. In terms of processing, contains two intramolecular disulfide bonds.

It is found in the cell outer membrane. In terms of biological role, together with LptE, is involved in the assembly of lipopolysaccharide (LPS) at the surface of the outer membrane. The polypeptide is LPS-assembly protein LptD (Salmonella typhimurium (strain LT2 / SGSC1412 / ATCC 700720)).